Reading from the N-terminus, the 316-residue chain is 4-hydroxy-3-methylbut-2-enyl diphosphate reductase (316 aa).

Cys12 serves as a coordination point for [4Fe-4S] cluster. His41 and His74 together coordinate (2E)-4-hydroxy-3-methylbut-2-enyl diphosphate. Dimethylallyl diphosphate-binding residues include His41 and His74. Residues His41 and His74 each coordinate isopentenyl diphosphate. Position 96 (Cys96) interacts with [4Fe-4S] cluster. His124 serves as a coordination point for (2E)-4-hydroxy-3-methylbut-2-enyl diphosphate. His124 is a binding site for dimethylallyl diphosphate. His124 is an isopentenyl diphosphate binding site. The active-site Proton donor is the Glu126. Residue Thr167 coordinates (2E)-4-hydroxy-3-methylbut-2-enyl diphosphate. Cys197 contributes to the [4Fe-4S] cluster binding site. 4 residues coordinate (2E)-4-hydroxy-3-methylbut-2-enyl diphosphate: Ser225, Ser226, Asn227, and Ser269. Dimethylallyl diphosphate is bound by residues Ser225, Ser226, Asn227, and Ser269. Isopentenyl diphosphate is bound by residues Ser225, Ser226, Asn227, and Ser269.

It belongs to the IspH family. Homodimer. [4Fe-4S] cluster serves as cofactor.

It carries out the reaction isopentenyl diphosphate + 2 oxidized [2Fe-2S]-[ferredoxin] + H2O = (2E)-4-hydroxy-3-methylbut-2-enyl diphosphate + 2 reduced [2Fe-2S]-[ferredoxin] + 2 H(+). The catalysed reaction is dimethylallyl diphosphate + 2 oxidized [2Fe-2S]-[ferredoxin] + H2O = (2E)-4-hydroxy-3-methylbut-2-enyl diphosphate + 2 reduced [2Fe-2S]-[ferredoxin] + 2 H(+). It functions in the pathway isoprenoid biosynthesis; dimethylallyl diphosphate biosynthesis; dimethylallyl diphosphate from (2E)-4-hydroxy-3-methylbutenyl diphosphate: step 1/1. The protein operates within isoprenoid biosynthesis; isopentenyl diphosphate biosynthesis via DXP pathway; isopentenyl diphosphate from 1-deoxy-D-xylulose 5-phosphate: step 6/6. In terms of biological role, catalyzes the conversion of 1-hydroxy-2-methyl-2-(E)-butenyl 4-diphosphate (HMBPP) into a mixture of isopentenyl diphosphate (IPP) and dimethylallyl diphosphate (DMAPP). Acts in the terminal step of the DOXP/MEP pathway for isoprenoid precursor biosynthesis. The chain is 4-hydroxy-3-methylbut-2-enyl diphosphate reductase from Salmonella paratyphi B (strain ATCC BAA-1250 / SPB7).